The sequence spans 265 residues: Undecaprenyl-diphosphatase (265 aa).

8 consecutive transmembrane segments (helical) span residues 1–21 (MDFI…FLPI), 39–61 (QGLA…YFRL), 85–105 (LAWA…MLTE), 115–135 (LIIA…DWAG), 149–169 (ILFI…RSGI), 187–207 (FSFL…ALDL), 218–238 (ALAL…HYFF), and 244–264 (IGML…FYLF).

Belongs to the UppP family.

The protein localises to the cell inner membrane. The catalysed reaction is di-trans,octa-cis-undecaprenyl diphosphate + H2O = di-trans,octa-cis-undecaprenyl phosphate + phosphate + H(+). Catalyzes the dephosphorylation of undecaprenyl diphosphate (UPP). Confers resistance to bacitracin. In Nitrosococcus oceani (strain ATCC 19707 / BCRC 17464 / JCM 30415 / NCIMB 11848 / C-107), this protein is Undecaprenyl-diphosphatase.